We begin with the raw amino-acid sequence, 366 residues long: Neutral protease 2 homolog BDBG_02110 (366 aa).

Positions 1–19 are cleaved as a signal peptide; that stretch reads MQLSSVLLTAAGLLAPVYS. Positions 23–184 are excised as a propeptide; it reads ISIGRRSEGL…RAKIHDHLAQ (162 aa). Residues N123 and N192 are each glycosylated (N-linked (GlcNAc...) asparagine). C272 and C290 are oxidised to a cystine. H314 contacts Zn(2+). Residue E315 is part of the active site. H318 is a Zn(2+) binding site.

The protein belongs to the peptidase M35 family. Zn(2+) is required as a cofactor.

It is found in the secreted. It carries out the reaction Preferential cleavage of bonds with hydrophobic residues in P1'. Also 3-Asn-|-Gln-4 and 8-Gly-|-Ser-9 bonds in insulin B chain.. Secreted metalloproteinase that allows assimilation of proteinaceous substrates. Shows high activities on basic nuclear substrates such as histone and protamine. The sequence is that of Neutral protease 2 homolog BDBG_02110 from Blastomyces gilchristii (strain SLH14081) (Blastomyces dermatitidis).